The sequence spans 1059 residues: MQVRKRRGLLDVSTAVLVGILAGFLGVVLAASGVLSFGKEASSKGDSSLETVLALSFEGTTEGVVPFGKDVVLTASQDVAADGEYSLKVENRTSPWDGVEIDLTGKVKSGADYLLSFQVYQSSDAPQLFNVVARTEDEKGERYDVILDKVVVSDHWKEILVPFSPTFEGTPAKYSLIIVASKNTNFNFYLDKVQVLAPKESGPKVIYETSFENGVGDWQPRGDVNIEASSEVAHSGKSSLFISNRQKGWQGAQINLKGILKTGKTYAFEAWVYQNSGQDQTIIMTMQRKYSSDASTQYEWIKSATVPSGQWVQLSGTYTIPAGVTVEDLTLYFESQNPTLEFYVDDVKIVDTTSAEIKIEMEPEKEIPALKEVLKDYFKVGVALPSKVFLNPKDIELITKHFNSITAENEMKPESLLAGIENGKLKFRFETADKYIQFVEENGMVIRGHTLVWHNQTPDWFFKDENGNLLSKEAMTERLKEYIHTVVGHFKGKVYAWDVVNEAVDPNQPDGLRRSTWYQIMGPDYIELAFKFAREADPDAKLFYNDYNTFEPRKRDIIYNLVKDLKEKGLIDGIGMQCHISLATDIKQIEEAIKKFSTIPGIEIHITELDMSVYRDSSSNYPEAPRTALIEQAHKMMQLFEIFKKYSNVITNVTFWGLKDDYSWRATRRNDWPLIFDKDHQAKLAYWAIVAPEVLPPLPKESRISEGEAVVVGMMDDSYLMSKPIEILDEEGNVKATIRAVWKDSTIYIYGEVQDKTKKPAEDGVAIFINPNNERTPYLQPDDTYAVLWTNWKTEVNREDVQVKKFVGPGFRRYSFEMSITIPGVEFKKDSYIGFDAAVIDDGKWYSWSDTTNSQKTNTMNYGTLKLEGIMVATAKYGTPVIDGEIDEIWNTTEEIETKAVAMGSLDKNATAKVRVLWDENYLYVLAIVKDPVLNKDNSNPWEQDSVEIFIDENNHKTGYYEDDDAQFRVNYMNEQTFGTGGSPARFKTAVKLIEGGYIVEAAIKWKTIKPTPNTVIGFNIQVNDANEKGQRVGIISWSDPTNNSWRDPSKFGNLRLIK.

Positions methionine 1–alanine 30 are cleaved as a signal peptide. The tract at residues serine 47 to lysine 199 is A-1. An A-2 region spans residues glutamate 200 to serine 354. One can recognise a GH10 domain in the interval glutamate 364–proline 692. The active-site Proton donor is glutamate 502. Glutamate 608 functions as the Nucleophile in the catalytic mechanism. 2 consecutive CBM-cenC domains span residues lysine 700 to isoleucine 870 and methionine 871 to lysine 1059.

It belongs to the glycosyl hydrolase 10 (cellulase F) family.

It catalyses the reaction Endohydrolysis of (1-&gt;4)-beta-D-xylosidic linkages in xylans.. The protein is Endo-1,4-beta-xylanase A (xynA) of Thermotoga maritima (strain ATCC 43589 / DSM 3109 / JCM 10099 / NBRC 100826 / MSB8).